The following is a 372-amino-acid chain: tRNA-specific 2-thiouridylase MnmA (372 aa).

ATP contacts are provided by residues 13–20 (GMSGGVDS) and M39. Positions 99 to 101 (NPD) are interaction with target base in tRNA. The Nucleophile role is filled by C104. C104 and C200 are oxidised to a cystine. An ATP-binding site is contributed by G128. Positions 150 to 152 (KDQ) are interaction with tRNA. C200 (cysteine persulfide intermediate) is an active-site residue. Positions 310 to 311 (RY) are interaction with tRNA.

Belongs to the MnmA/TRMU family.

Its subcellular location is the cytoplasm. The catalysed reaction is S-sulfanyl-L-cysteinyl-[protein] + uridine(34) in tRNA + AH2 + ATP = 2-thiouridine(34) in tRNA + L-cysteinyl-[protein] + A + AMP + diphosphate + H(+). Its function is as follows. Catalyzes the 2-thiolation of uridine at the wobble position (U34) of tRNA, leading to the formation of s(2)U34. This is tRNA-specific 2-thiouridylase MnmA from Bacillus licheniformis (strain ATCC 14580 / DSM 13 / JCM 2505 / CCUG 7422 / NBRC 12200 / NCIMB 9375 / NCTC 10341 / NRRL NRS-1264 / Gibson 46).